The chain runs to 608 residues: ATP-binding protein Uup (608 aa).

ABC transporter domains lie at 7–217 (APVL…AADA) and 285–512 (VEAK…FAPV). Residues 42-49 (GRNGAGKS) and 317-324 (GPNGAGKT) each bind ATP. The C-terminal domain (CTD), binds DNA stretch occupies residues 522–608 (AAPAAPKKSA…LEEKKENLAG (87 aa)).

This sequence belongs to the ABC transporter superfamily. ABCF family. Uup subfamily.

It localises to the cytoplasm. It catalyses the reaction ATP + H2O = ADP + phosphate + H(+). Probably plays a role in ribosome assembly or function. May be involved in resolution of branched DNA intermediates that result from template switching in postreplication gaps. Binds DNA and has ATPase activity. Its function is as follows. One of a cluster of genes involved in attachment of the holdfast to the cell. The holdfast is a structure that allows the bacteria to firmly adhere to surfaces. This Caulobacter vibrioides (strain ATCC 19089 / CIP 103742 / CB 15) (Caulobacter crescentus) protein is ATP-binding protein Uup.